We begin with the raw amino-acid sequence, 323 residues long: Secreted frizzled-related protein 3 (323 aa).

The signal sequence occupies residues 1–32 (MVCCGPGRMLLGWAGLLVLAALCLLQVPGAQA). Residues 33 to 150 (AACEPVRIPL…VYDRGVCISP (118 aa)) form the FZ domain. 5 cysteine pairs are disulfide-bonded: Cys-35–Cys-96, Cys-43–Cys-89, Cys-80–Cys-119, Cys-108–Cys-147, and Cys-112–Cys-136. Asn-49 carries N-linked (GlcNAc...) asparagine glycosylation. Residues 178–298 (CKCKPVRATQ…WDMKLRHLGL (121 aa)) enclose the NTR domain. Residues 299–323 (GKTDASDSTQNQKSGRNSNPRPARS) form a disordered region. Residues 304 to 323 (SDSTQNQKSGRNSNPRPARS) are compositionally biased toward polar residues.

The protein belongs to the secreted frizzled-related protein (sFRP) family. In terms of assembly, interacts with MYOC. Expressed in kidney, brain, testis. Weak expression in spleen and heart.

The protein resides in the secreted. Functionally, soluble frizzled-related proteins (sFRPS) function as modulators of Wnt signaling through direct interaction with Wnts. They have a role in regulating cell growth and differentiation in specific cell types. SFRP3/FRZB appears to be involved in limb skeletogenesis. Antagonist of Wnt8 signaling. Regulates chondrocyte maturation and long bone development. The protein is Secreted frizzled-related protein 3 (Frzb) of Mus musculus (Mouse).